The chain runs to 333 residues: Probable G-protein coupled receptor 174 (333 aa).

The Extracellular portion of the chain corresponds to 1–27; the sequence is MPANYTCTRPDGDNTDFRYFIYAVTYT. Asparagine 4 is a glycosylation site (N-linked (GlcNAc...) asparagine). Residues 28-48 form a helical membrane-spanning segment; it reads VILVPGLIGNILALWVFYGYM. Topologically, residues 49–53 are cytoplasmic; sequence KETKR. Residues 54–74 form a helical membrane-spanning segment; that stretch reads AVIFMINLAIADLLQVLSLPL. Residues 75–91 are Extracellular-facing; it reads RIFYYLNHDWPFGPGLC. The cysteines at positions 91 and 168 are disulfide-linked. A helical transmembrane segment spans residues 92–112; it reads MFCFYLKYVNMYASIYFLVCI. Topologically, residues 113 to 134 are cytoplasmic; the sequence is SVRRFWFLMYPFRFHDCKQKYD. The helical transmembrane segment at 135-155 threads the bilayer; it reads LYISIAGWLIICLACVLFPLL. Over 156 to 182 the chain is Extracellular; that stretch reads RTSDDTSGNRTKCFVDLPTRNVNLAQS. Asparagine 164 is a glycosylation site (N-linked (GlcNAc...) asparagine). The chain crosses the membrane as a helical span at residues 183–203; that stretch reads VVMMTIGELIGFVTPLLIVLY. Topologically, residues 204–231 are cytoplasmic; it reads CTWKTVLSLQDKYPMAQDLGEKQKALKM. The chain crosses the membrane as a helical span at residues 232 to 252; sequence ILTCAGVFLICFAPYHFSFPL. Over 253–269 the chain is Extracellular; that stretch reads DFLVKSNEIKSCLARRV. A helical transmembrane segment spans residues 270–290; the sequence is ILIFHSVALCLASLNSCLDPV. Topologically, residues 291–333 are cytoplasmic; the sequence is IYYFSTNEFRRRLSRQDLHDSIQLHAKSFVSNHTASTMTPELC.

The protein belongs to the G-protein coupled receptor 1 family. As to quaternary structure, interacts with GNA13. Interacts with CCL21.

It is found in the cell membrane. Functionally, G-protein-coupled receptor of lysophosphatidylserine (LysoPS) that plays different roles in immune response. Plays a negative role in regulatory T-cell accumulation and homeostasis. Under inflammatory conditions where LysoPS production increases, contributes to the down-regulation of regulatory T-cell activity to favor effector response. Mediates the suppression of IL-2 production in activated T-lymphocytes leading to inhibition of growth, proliferation and differentiation of T-cells. Mechanistically, acts via G(s)-containing heterotrimeric G proteins to trigger elevated cyclic AMP levels and protein kinase A/PKA activity, which may in turn act to antagonize proximal TCR signaling. Plays an important role in the initial period of sepsis through the regulation of macrophage polarization and pro- and anti-inflammatory cytokine secretions. Upon testosterone treatment, acts as a receptor for CCL21 and subsequently triggers through G(q)-alpha and G(12)/G(13) proteins a calcium flux leading to chemotactic effects on activated B-cells. Signals via GNA13 and PKA to promote CD86 up-regulation by follicular B-cells. The chain is Probable G-protein coupled receptor 174 (GPR174) from Homo sapiens (Human).